The sequence spans 388 residues: Flap endonuclease 1 (388 aa).

Residues 1–104 (MGILGLSKLI…GELAKRAERR (104 aa)) are N-domain. Mg(2+) is bound at residue D34. R47 and R70 together coordinate DNA. D86, E158, E160, D179, and D181 together coordinate Mg(2+). Residues 122 to 253 (EIEKFNRRLV…KRAIELINNY (132 aa)) are I-domain. E158 serves as a coordination point for DNA. Residues G231 and D233 each coordinate DNA. D233 contacts Mg(2+). Residues 336–344 (TQVRLDSFF) form an interaction with PCNA region. A disordered region spans residues 343–388 (FFKTLPSTPSATNAAKRKAEEAKKSANNKKAKTSGGGGGGRGRRPK).

It belongs to the XPG/RAD2 endonuclease family. FEN1 subfamily. In terms of assembly, interacts with PCNA. Three molecules of FEN1 bind to one PCNA trimer with each molecule binding to one PCNA monomer. PCNA stimulates the nuclease activity without altering cleavage specificity. Mg(2+) serves as cofactor. Phosphorylated. Phosphorylation upon DNA damage induces relocalization to the nuclear plasma.

It is found in the nucleus. The protein resides in the nucleolus. The protein localises to the nucleoplasm. It localises to the mitochondrion. Functionally, structure-specific nuclease with 5'-flap endonuclease and 5'-3' exonuclease activities involved in DNA replication and repair. During DNA replication, cleaves the 5'-overhanging flap structure that is generated by displacement synthesis when DNA polymerase encounters the 5'-end of a downstream Okazaki fragment. It enters the flap from the 5'-end and then tracks to cleave the flap base, leaving a nick for ligation. Also involved in the long patch base excision repair (LP-BER) pathway, by cleaving within the apurinic/apyrimidinic (AP) site-terminated flap. Acts as a genome stabilization factor that prevents flaps from equilibrating into structures that lead to duplications and deletions. Also possesses 5'-3' exonuclease activity on nicked or gapped double-stranded DNA, and exhibits RNase H activity. Also involved in replication and repair of rDNA and in repairing mitochondrial DNA. This chain is Flap endonuclease 1, found in Drosophila ananassae (Fruit fly).